The primary structure comprises 237 residues: V-type proton ATPase subunit E (237 aa).

Belongs to the V-ATPase E subunit family. V-ATPase is a heteromultimeric enzyme composed of a peripheral catalytic V1 complex (components A to H) attached to an integral membrane V0 proton pore complex (components: a, c, c', c'' and d).

Functionally, subunit of the peripheral V1 complex of vacuolar ATPase essential for assembly or catalytic function. V-ATPase is responsible for acidifying a variety of intracellular compartments in eukaryotic cells. In Gossypium hirsutum (Upland cotton), this protein is V-type proton ATPase subunit E (VATE).